A 215-amino-acid chain; its full sequence is Ependymin-1 (215 aa).

The N-terminal stretch at 1–20 (MHTVKLLCVVFSCLCAVAWA) is a signal peptide. N-linked (GlcNAc...) asparagine glycans are attached at residues Asn71 and Asn94.

Belongs to the ependymin family. Forms disulfide-linked dimers. Different glycosylation variants are known as EPD-beta and EPD-gamma. In terms of processing, binds calcium through the terminal sialic acids. EPDs are synthesized in the meninx and secreted in the cerebrospinal fluid.

It is found in the secreted. May play a role in neural plasticity. May be involved during axon regeneration. This Carassius auratus (Goldfish) protein is Ependymin-1 (epd1).